Consider the following 274-residue polypeptide: 2,3,4,5-tetrahydropyridine-2,6-dicarboxylate N-succinyltransferase (274 aa).

Positions 104 and 141 each coordinate substrate.

The protein belongs to the transferase hexapeptide repeat family. As to quaternary structure, homotrimer.

It localises to the cytoplasm. The catalysed reaction is (S)-2,3,4,5-tetrahydrodipicolinate + succinyl-CoA + H2O = (S)-2-succinylamino-6-oxoheptanedioate + CoA. The protein operates within amino-acid biosynthesis; L-lysine biosynthesis via DAP pathway; LL-2,6-diaminopimelate from (S)-tetrahydrodipicolinate (succinylase route): step 1/3. In Shigella dysenteriae serotype 1 (strain Sd197), this protein is 2,3,4,5-tetrahydropyridine-2,6-dicarboxylate N-succinyltransferase.